We begin with the raw amino-acid sequence, 367 residues long: DNA replication and repair protein RecF (367 aa).

30–37 (GANGSGKT) lines the ATP pocket.

Belongs to the RecF family.

Its subcellular location is the cytoplasm. The RecF protein is involved in DNA metabolism; it is required for DNA replication and normal SOS inducibility. RecF binds preferentially to single-stranded, linear DNA. It also seems to bind ATP. This Pseudomonas fluorescens (strain ATCC BAA-477 / NRRL B-23932 / Pf-5) protein is DNA replication and repair protein RecF.